Consider the following 232-residue polypeptide: Large ribosomal subunit protein uL1 (232 aa).

It belongs to the universal ribosomal protein uL1 family. Part of the 50S ribosomal subunit.

In terms of biological role, binds directly to 23S rRNA. The L1 stalk is quite mobile in the ribosome, and is involved in E site tRNA release. Its function is as follows. Protein L1 is also a translational repressor protein, it controls the translation of the L11 operon by binding to its mRNA. The sequence is that of Large ribosomal subunit protein uL1 from Xanthobacter autotrophicus (strain ATCC BAA-1158 / Py2).